Consider the following 138-residue polypeptide: Large ribosomal subunit protein uL16 (138 aa).

The span at 1–13 shows a compositional bias: basic residues; that stretch reads MLQPKRRKYRKEQ. The disordered stretch occupies residues 1 to 22; sequence MLQPKRRKYRKEQKGRNTGVAT.

Belongs to the universal ribosomal protein uL16 family. Part of the 50S ribosomal subunit.

In terms of biological role, binds 23S rRNA and is also seen to make contacts with the A and possibly P site tRNAs. This is Large ribosomal subunit protein uL16 from Paraburkholderia phymatum (strain DSM 17167 / CIP 108236 / LMG 21445 / STM815) (Burkholderia phymatum).